A 469-amino-acid polypeptide reads, in one-letter code: Argininosuccinate lyase (469 aa).

It belongs to the lyase 1 family. Argininosuccinate lyase subfamily.

The protein localises to the cytoplasm. The catalysed reaction is 2-(N(omega)-L-arginino)succinate = fumarate + L-arginine. Its pathway is amino-acid biosynthesis; L-arginine biosynthesis; L-arginine from L-ornithine and carbamoyl phosphate: step 3/3. The protein is Argininosuccinate lyase of Burkholderia orbicola (strain MC0-3).